The primary structure comprises 425 residues: AFP homolog 2 (425 aa).

Disordered regions lie at residues methionine 1–glutamate 207 and proline 288–asparagine 327. The necessary and sufficient for the interaction with TOPLESS stretch occupies residues leucine 7–glycine 17. A compositionally biased stretch (low complexity) spans glycine 20–serine 34. A compositionally biased stretch (basic and acidic residues) spans tyrosine 37–asparagine 54. The span at proline 66–glutamine 81 shows a compositional bias: low complexity. Residues asparagine 124–glutamate 140 are compositionally biased toward basic and acidic residues. Polar residues-rich tracts occupy residues serine 146–alanine 158, threonine 185–arginine 197, and proline 288–threonine 299. Residues threonine 322–threonine 425 are necessary and sufficient for the interaction with the JAZ proteins.

Belongs to the Ninja family. As to quaternary structure, component of a complex at least composed of TOPLESS, TPR2, TPR3, TIFY4B/PPD2, MYC3/ATR2 and TIFY3B/JAZ12. Interacts (via C-terminus) with TIFY10A/JAZ1; TIFY10B/JAZ2; TIFY6B/JAZ3; TIFY6A/JAZ4; TIFY11A/JAZ5; TIFY11B/JAZ6; TIFY7/JAZ9; TIFY9/JAZ10; TIFY3A/JAZ11; TIFY3B/JAZ12; TIFY4A/PPD1; TIFY4B/PPD2 and TIFY8 (via TIFY domain). Interacts with TOPLESS. Interacts with PAT1H1.

The protein localises to the nucleus. Its function is as follows. Acts as a transcriptional repressor. Negative regulator of jasmonate responses. Connects the JAZ proteins and the non-JAZ protein TIFY8 with the TOPLESS corepressors. This Arabidopsis thaliana (Mouse-ear cress) protein is AFP homolog 2.